The primary structure comprises 347 residues: Outer membrane protein A (347 aa).

The signal sequence occupies residues 1–21 (MKKQALTIIFLLVSLVTGIQA). 8 beta stranded membrane passes run 26–36 (HWYLGTKMGWS), 63–74 (APVFGLFLGYEF), 78–86 (FSFEIENDT), 105–116 (NSLQLATKLSYP), 121–129 (FHIYTQLGG), 154–163 (PNVSLGAEYI), 168–175 (FITRLDYT), and 194–202 (DVALSFGWK). The tract at residues 207 to 218 (NINEIFSSYIPQ) is hinge-like. An OmpA-like domain is found at 220–347 (SDKQYVALNE…RRVEIEVLSD (128 aa)). The cysteines at positions 321 and 333 are disulfide-linked.

Belongs to the outer membrane OOP (TC 1.B.6) superfamily. OmpA family. Monomer and homodimer.

It is found in the cell outer membrane. In terms of biological role, with TolR probably plays a role in maintaining the position of the peptidoglycan cell wall in the periplasm. Acts as a porin with low permeability that allows slow penetration of small solutes; an internal gate slows down solute passage. The sequence is that of Outer membrane protein A from Buchnera aphidicola subsp. Schizaphis graminum (strain Sg).